The primary structure comprises 497 residues: ATP synthase subunit alpha, chloroplastic (497 aa).

Residue 170–177 (GDRQTGKT) participates in ATP binding.

Belongs to the ATPase alpha/beta chains family. In terms of assembly, F-type ATPases have 2 components, CF(1) - the catalytic core - and CF(0) - the membrane proton channel. CF(1) has five subunits: alpha(3), beta(3), gamma(1), delta(1), epsilon(1). CF(0) has four main subunits: a, b, b' and c.

Its subcellular location is the plastid. It localises to the chloroplast thylakoid membrane. It catalyses the reaction ATP + H2O + 4 H(+)(in) = ADP + phosphate + 5 H(+)(out). Produces ATP from ADP in the presence of a proton gradient across the membrane. The alpha chain is a regulatory subunit. The polypeptide is ATP synthase subunit alpha, chloroplastic (Bigelowiella natans (Pedinomonas minutissima)).